We begin with the raw amino-acid sequence, 89 residues long: UPF0297 protein MGAS9429_Spy1808 (89 aa).

This sequence belongs to the UPF0297 family.

This is UPF0297 protein MGAS9429_Spy1808 from Streptococcus pyogenes serotype M12 (strain MGAS9429).